A 171-amino-acid chain; its full sequence is Photosystem I assembly protein Ycf3 (171 aa).

TPR repeat units follow at residues 35–68 (AFTY…EVDA), 72–105 (SYIL…NPYL), and 120–153 (GEQA…APTN).

This sequence belongs to the Ycf3 family.

It localises to the plastid. It is found in the chloroplast thylakoid membrane. In terms of biological role, essential for the assembly of the photosystem I (PSI) complex. May act as a chaperone-like factor to guide the assembly of the PSI subunits. This chain is Photosystem I assembly protein Ycf3, found in Nephroselmis olivacea (Green alga).